We begin with the raw amino-acid sequence, 196 residues long: Imidazole glycerol phosphate synthase subunit HisH (196 aa).

The Glutamine amidotransferase type-1 domain occupies 2-196 (KVVILDTGCA…AQLLKNFLEM (195 aa)). The active-site Nucleophile is the cysteine 77. Residues histidine 178 and glutamate 180 contribute to the active site.

As to quaternary structure, heterodimer of HisH and HisF.

It is found in the cytoplasm. The catalysed reaction is 5-[(5-phospho-1-deoxy-D-ribulos-1-ylimino)methylamino]-1-(5-phospho-beta-D-ribosyl)imidazole-4-carboxamide + L-glutamine = D-erythro-1-(imidazol-4-yl)glycerol 3-phosphate + 5-amino-1-(5-phospho-beta-D-ribosyl)imidazole-4-carboxamide + L-glutamate + H(+). It carries out the reaction L-glutamine + H2O = L-glutamate + NH4(+). It functions in the pathway amino-acid biosynthesis; L-histidine biosynthesis; L-histidine from 5-phospho-alpha-D-ribose 1-diphosphate: step 5/9. Functionally, IGPS catalyzes the conversion of PRFAR and glutamine to IGP, AICAR and glutamate. The HisH subunit catalyzes the hydrolysis of glutamine to glutamate and ammonia as part of the synthesis of IGP and AICAR. The resulting ammonia molecule is channeled to the active site of HisF. The sequence is that of Imidazole glycerol phosphate synthase subunit HisH from Pectobacterium atrosepticum (strain SCRI 1043 / ATCC BAA-672) (Erwinia carotovora subsp. atroseptica).